Reading from the N-terminus, the 280-residue chain is MLIINDNNLSGLSLQRVNGTGELSVQFKDGRSRISRLYQEGAAKIRMPQAVTGPLEAILINTSGGLTGGDRLKWDVALDDGASAVITTQACERIYRSGGGEARIATRLKAAKGTRLAWLPQETILFNRSILSRRLDVELEEGAQMLVVEATVFGRLAMGERVVAARFADRWRVRLGGRVIHAEEFRLGPDVGAELQAPAVAGGACAMATVLMVCEQAGRYLETARAIIGEEGGCSLWRVGKASKLVVRLYAPDSYALRRRLCPLVALLNGKAGLPKVWTI.

The protein belongs to the UreD family. As to quaternary structure, ureD, UreF and UreG form a complex that acts as a GTP-hydrolysis-dependent molecular chaperone, activating the urease apoprotein by helping to assemble the nickel containing metallocenter of UreC. The UreE protein probably delivers the nickel.

The protein localises to the cytoplasm. Its function is as follows. Required for maturation of urease via the functional incorporation of the urease nickel metallocenter. This is Urease accessory protein UreD 1 from Brucella abortus biovar 1 (strain 9-941).